A 334-amino-acid chain; its full sequence is Phosphate acyltransferase (334 aa).

This sequence belongs to the PlsX family. As to quaternary structure, homodimer. Probably interacts with PlsY.

The protein localises to the cytoplasm. The catalysed reaction is a fatty acyl-[ACP] + phosphate = an acyl phosphate + holo-[ACP]. It participates in lipid metabolism; phospholipid metabolism. Catalyzes the reversible formation of acyl-phosphate (acyl-PO(4)) from acyl-[acyl-carrier-protein] (acyl-ACP). This enzyme utilizes acyl-ACP as fatty acyl donor, but not acyl-CoA. The sequence is that of Phosphate acyltransferase from Desulfitobacterium hafniense (strain DSM 10664 / DCB-2).